A 386-amino-acid chain; its full sequence is Demethylsterigmatocystin 6-O-methyltransferase (386 aa).

137 to 150 (FDISGPCTQILPDF) provides a ligand contact to substrate. A substrate binding region spans residues 177–197 (MFEWMPQHPKHMESLGHLMAL). S-adenosyl-L-methionine contacts are provided by residues 228 to 229 (GG), aspartate 253, 273 to 274 (NF), and arginine 289. Catalysis depends on histidine 293, which acts as the Proton acceptor.

Belongs to the class I-like SAM-binding methyltransferase superfamily. Cation-independent O-methyltransferase family. COMT subfamily.

It carries out the reaction 6-demethylsterigmatocystin + S-adenosyl-L-methionine = sterigmatocystin + S-adenosyl-L-homocysteine + H(+). It functions in the pathway mycotoxin biosynthesis; aflatoxin biosynthesis. Catalyzes both the conversion of demethylsterigmatocystin (DMST) to sterigmatocystin and the conversion of dihydrodemethylsterigmatocystin to dihydrosterigmatocystin (DHDMST) during aflatoxin biosynthesis. In Aspergillus flavus (strain ATCC 200026 / FGSC A1120 / IAM 13836 / NRRL 3357 / JCM 12722 / SRRC 167), this protein is Demethylsterigmatocystin 6-O-methyltransferase (omtB).